Here is a 78-residue protein sequence, read N- to C-terminus: Antitoxin VapB2 (78 aa).

Positions 4–44 (AKIFMNGQSQAVRLPKEFRFSVKEVSVIPLGKGIVLQPLPN) constitute a SpoVT-AbrB domain.

It belongs to the VapB family. As to quaternary structure, forms complexes with VapC2; probably VapC2(4):VapB2(2) in the absence of DNA, and VapC2(4):VapB2(4) in the presence of DNA. Crystallizes as heterodimers with stoichiometry VapC2(4):VapB2(4) in the presence of its probable promoter DNA. The heterodimers are in contact via alternative VapC-VapC and VapB-VapB interactions. This subunit contacts DNA.

Functionally, antitoxin component of a type II toxin-antitoxin (TA) system. Upon expression in E.coli or S.cerevisiae neutralizes the effect of cognate toxin VapC2, partially inhibits the RNase activity of VapC2. The sequence is that of Antitoxin VapB2 (vapB2) from Rickettsia felis (strain ATCC VR-1525 / URRWXCal2) (Rickettsia azadi).